Reading from the N-terminus, the 253-residue chain is 3-deoxy-manno-octulosonate cytidylyltransferase (253 aa).

The protein belongs to the KdsB family.

It localises to the cytoplasm. It carries out the reaction 3-deoxy-alpha-D-manno-oct-2-ulosonate + CTP = CMP-3-deoxy-beta-D-manno-octulosonate + diphosphate. It participates in nucleotide-sugar biosynthesis; CMP-3-deoxy-D-manno-octulosonate biosynthesis; CMP-3-deoxy-D-manno-octulosonate from 3-deoxy-D-manno-octulosonate and CTP: step 1/1. The protein operates within bacterial outer membrane biogenesis; lipopolysaccharide biosynthesis. Functionally, activates KDO (a required 8-carbon sugar) for incorporation into bacterial lipopolysaccharide in Gram-negative bacteria. This Pseudoalteromonas translucida (strain TAC 125) protein is 3-deoxy-manno-octulosonate cytidylyltransferase.